Consider the following 357-residue polypeptide: Norreticuline-7-O-methyltransferase (357 aa).

Asp225 is an S-adenosyl-L-methionine binding site. His263 acts as the Proton acceptor in catalysis.

Belongs to the class I-like SAM-binding methyltransferase superfamily. Cation-independent O-methyltransferase family. As to expression, expressed instems, leaves, roots and seedlings.

Its function is as follows. Involved in the biosynthesis of benzylisoquinoline alkaloids. Catalyzes specifically the methylation of norreticuline at position seven to produce norlaudanine. No activity with norcoclaurine, reticuline, norlaudanosoline, norisoorientaline, scoulerine, salutaridinol, oripavine, salsolinol, codeine or morphine. Involved in papaverine biosynthesis. The sequence is that of Norreticuline-7-O-methyltransferase from Papaver somniferum (Opium poppy).